Consider the following 763-residue polypeptide: Endoplasmic reticulum membrane sensor NFE2L1 (763 aa).

Residues tyrosine 7–valine 24 form a helical; Signal-anchor for type II membrane protein membrane-spanning segment. The disordered stretch occupies residues aspartate 108–serine 150. Residues serine 116–glutamine 131 are compositionally biased toward low complexity. A cholesterol recognition/amino acid consensus (CRAC) region region spans residues isoleucine 180–lysine 188. N-linked (GlcNAc...) asparagine glycosylation is found at asparagine 338 and asparagine 350. The interval serine 369 to glutamate 373 is CPD. N-linked (GlcNAc...) asparagine glycosylation occurs at asparagine 413. Disordered regions lie at residues glutamate 460 to threonine 523 and threonine 585 to arginine 604. Residues aspartate 466–serine 470 carry the Destruction motif motif. Over residues aspartate 466–alanine 514 the composition is skewed to low complexity. Serine 519 bears the Phosphoserine; by CK2 mark. A compositionally biased stretch (basic and acidic residues) spans glycine 589–arginine 604. Position 590 is a phosphoserine; by PKA (serine 590). One can recognise a bZIP domain in the interval leucine 645–leucine 708. A basic motif region spans residues arginine 647–lysine 666. Residues leucine 673–leucine 687 are leucine-zipper. The Nuclear localization signal signature appears at arginine 752–lysine 759.

It belongs to the bZIP family. CNC subfamily. As to quaternary structure, interacts with KEAP1. Interacts (via CPD region) with FBXW7; leading to its ubiquitination and degradation. Interacts with SYVN1/HRD1; leading to its ubiquitination and degradation. Interacts (when ubiquitinated) with DDI2; leading to its cleavage. In terms of assembly, interacts (via the bZIP domain) with small MAF protein (MAFF, MAFG or MAFK); required for binding to antioxidant response elements (AREs) on DNA. Interacts (via Destruction motif) with BTRC; leading to its ubiquitination and degradation. Interacts with CEBPB; the heterodimer represses expression of DSPP during odontoblast differentiation. Interacts with MOTS-c, a peptide produced by the mitochondrially encoded 12S rRNA MT-RNR1. In terms of processing, cleaved at Leu-104 by the aspartyl protease DDI2 following retrotranslocation, releasing the protein from the endoplasmic reticulum membrane and forming the transcription factor NRF1 that translocates into the nucleus. Ubiquitination is prerequisite for cleavage by aspartyl protease DDI2. Post-translationally, N-glycosylated in normal conditions, when it has a single-pass type II membrane protein topology, with the DNA-binding domain facing the endoplasmic reticulum lumen. Deglycosylated during retrotranslocation to the cytosolic side of the membrane, to have a single-pass type III membrane protein topology with the major part of the protein facing the cytosol. Ubiquitinated by the SCF(FBXW7) complex and SYVN1/HRD1, leading to its degradation by the proteasome. Ubiquitinated during retrotranslocation to the cytosolic side of the membrane: ubiquitination does not lead to degradation and is required for processing by the aspartyl protease DDI2 and subsequent release from the endoplasmic reticulum membrane. In terms of processing, phosphorylation by CK2 at Ser-519 inhibits transcription factor activity, possibly by affecting DNA-binding activity. Phosphorylation at Ser-590 is required for interaction with CEBPB. Post-translationally, ubiquitinated by the SCF(BTRC) complex in the nucleus, leading to its degradation by the proteasome.

It is found in the endoplasmic reticulum membrane. The protein localises to the nucleus. In terms of biological role, endoplasmic reticulum membrane sensor that translocates into the nucleus in response to various stresses to act as a transcription factor. Constitutes a precursor of the transcription factor NRF1. Able to detect various cellular stresses, such as cholesterol excess, oxidative stress or proteasome inhibition. In response to stress, it is released from the endoplasmic reticulum membrane following cleavage by the protease DDI2 and translocates into the nucleus to form the transcription factor NRF1. Acts as a key sensor of cholesterol excess: in excess cholesterol conditions, the endoplasmic reticulum membrane form of the protein directly binds cholesterol via its CRAC motif, preventing cleavage and release of the transcription factor NRF1, thereby allowing expression of genes promoting cholesterol removal, such as CD36. Involved in proteasome homeostasis: in response to proteasome inhibition, it is released from the endoplasmic reticulum membrane, translocates to the nucleus and activates expression of genes encoding proteasome subunits. Its function is as follows. CNC-type bZIP family transcription factor that translocates to the nucleus and regulates expression of target genes in response to various stresses. Heterodimerizes with small-Maf proteins (MAFF, MAFG or MAFK) and binds DNA motifs including the antioxidant response elements (AREs), which regulate expression of genes involved in oxidative stress response. Activates or represses expression of target genes, depending on the context. Plays a key role in cholesterol homeostasis by acting as a sensor of cholesterol excess: in low cholesterol conditions, translocates into the nucleus and represses expression of genes involved in defense against cholesterol excess, such as CD36. In excess cholesterol conditions, the endoplasmic reticulum membrane form of the protein directly binds cholesterol via its CRAC motif, preventing cleavage and release of the transcription factor NRF1, thereby allowing expression of genes promoting cholesterol removal. Critical for redox balance in response to oxidative stress: acts by binding the AREs motifs on promoters and mediating activation of oxidative stress response genes, such as GCLC, GCLM, GSS, MT1 and MT2. Plays an essential role during fetal liver hematopoiesis: probably has a protective function against oxidative stress and is involved in lipid homeostasis in the liver. Involved in proteasome homeostasis: in response to proteasome inhibition, mediates the 'bounce-back' of proteasome subunits by translocating into the nucleus and activating expression of genes encoding proteasome subunits. Also involved in regulating glucose flux. Together with CEBPB; represses expression of DSPP during odontoblast differentiation. In response to ascorbic acid induction, activates expression of SP7/Osterix in osteoblasts. This is Endoplasmic reticulum membrane sensor NFE2L1 from Bos taurus (Bovine).